Here is a 192-residue protein sequence, read N- to C-terminus: MKNNVVVVTGVPGVGSTTVMQKAMDKLIEEKISYKMVNFGSMMFEVAKEEGLAEERDQMRKLNPETQKRIQKMAGRKIAELSKHSPVAVDTHSTVKTPKGYLPGLPAWVLNELNPDMVIVVETDGDEILMRRMGDESRNRDLETTKSIEEHQFMNRCAAMAYGVLTGATVKIVKNKNGLVDNAVEELISVLR.

10 to 18 (GVPGVGSTT) is a binding site for ATP.

This sequence belongs to the archaeal adenylate kinase family. In terms of assembly, monomer.

It is found in the cytoplasm. The enzyme catalyses AMP + ATP = 2 ADP. The polypeptide is Adenylate kinase (Methanococcus vannielii (strain ATCC 35089 / DSM 1224 / JCM 13029 / OCM 148 / SB)).